A 158-amino-acid polypeptide reads, in one-letter code: Transcriptional repressor NrdR (158 aa).

A zinc finger spans residues 3 to 34; the sequence is CPYCGYPDSKVIDSRPTDDNTSIRRRRECLKC. Positions 49-139 constitute an ATP-cone domain; that stretch reads ILVIKKDNRR…VYRQFKDINT (91 aa).

It belongs to the NrdR family. Zn(2+) is required as a cofactor.

Its function is as follows. Negatively regulates transcription of bacterial ribonucleotide reductase nrd genes and operons by binding to NrdR-boxes. This is Transcriptional repressor NrdR from Thermoanaerobacter pseudethanolicus (strain ATCC 33223 / 39E) (Clostridium thermohydrosulfuricum).